The following is a 108-amino-acid chain: Thiosulfate sulfurtransferase GlpE (108 aa).

One can recognise a Rhodanese domain in the interval lysine 17–glutamate 105. Cysteine 65 functions as the Cysteine persulfide intermediate in the catalytic mechanism.

Belongs to the GlpE family.

The protein localises to the cytoplasm. The enzyme catalyses thiosulfate + hydrogen cyanide = thiocyanate + sulfite + 2 H(+). It carries out the reaction thiosulfate + [thioredoxin]-dithiol = [thioredoxin]-disulfide + hydrogen sulfide + sulfite + 2 H(+). Transferase that catalyzes the transfer of sulfur from thiosulfate to thiophilic acceptors such as cyanide or dithiols. May function in a CysM-independent thiosulfate assimilation pathway by catalyzing the conversion of thiosulfate to sulfite, which can then be used for L-cysteine biosynthesis. In Serratia proteamaculans (strain 568), this protein is Thiosulfate sulfurtransferase GlpE.